We begin with the raw amino-acid sequence, 162 residues long: Calcium-binding protein 4b (162 aa).

EF-hand domains follow at residues 10–45 (ELTN…CKYP), 46–81 (NPTL…DYII), 85–120 (TCLK…SGSN), and 123–158 (QAKV…YFEI). The Ca(2+) site is built by Asp23, Asn25, Asp27, Gln29, Glu34, Asp59, Asp61, Asp63, Lys65, and Glu70. Ca(2+) contacts are provided by Asp136, Asp138, Asp140, Cys142, and Glu147.

This Dictyostelium discoideum (Social amoeba) protein is Calcium-binding protein 4b (cbpD2).